Here is a 241-residue protein sequence, read N- to C-terminus: Uridylate kinase (241 aa).

14–17 (KLSG) serves as a coordination point for ATP. Glycine 56 contacts UMP. ATP is bound by residues glycine 57 and arginine 61. UMP-binding positions include aspartate 77 and 138–145 (TGNPFFTT). Residues threonine 165, tyrosine 171, and aspartate 174 each contribute to the ATP site.

Belongs to the UMP kinase family. Homohexamer.

The protein resides in the cytoplasm. The catalysed reaction is UMP + ATP = UDP + ADP. Its pathway is pyrimidine metabolism; CTP biosynthesis via de novo pathway; UDP from UMP (UMPK route): step 1/1. Inhibited by UTP. In terms of biological role, catalyzes the reversible phosphorylation of UMP to UDP. The protein is Uridylate kinase of Psychrobacter cryohalolentis (strain ATCC BAA-1226 / DSM 17306 / VKM B-2378 / K5).